The sequence spans 89 residues: Small ribosomal subunit protein uS15 (89 aa).

This sequence belongs to the universal ribosomal protein uS15 family. In terms of assembly, part of the 30S ribosomal subunit. Forms a bridge to the 50S subunit in the 70S ribosome, contacting the 23S rRNA.

One of the primary rRNA binding proteins, it binds directly to 16S rRNA where it helps nucleate assembly of the platform of the 30S subunit by binding and bridging several RNA helices of the 16S rRNA. Its function is as follows. Forms an intersubunit bridge (bridge B4) with the 23S rRNA of the 50S subunit in the ribosome. In Streptococcus suis (strain 98HAH33), this protein is Small ribosomal subunit protein uS15.